We begin with the raw amino-acid sequence, 130 residues long: Mini-ribonuclease 3 (130 aa).

The active site involves Asp19. The disordered stretch occupies residues Glu69 to Ala91.

This sequence belongs to the MrnC RNase family. In terms of assembly, homodimer. Mg(2+) is required as a cofactor.

The protein localises to the cytoplasm. In terms of biological role, involved in correct processing of both the 5' and 3' ends of 23S rRNA precursor. Processes 30S rRNA precursor transcript even in absence of ribonuclease 3 (Rnc); Rnc processes 30S rRNA into smaller rRNA precursors. The protein is Mini-ribonuclease 3 of Symbiobacterium thermophilum (strain DSM 24528 / JCM 14929 / IAM 14863 / T).